The sequence spans 1339 residues: DNA-directed RNA polymerase subunit beta'' (1339 aa).

Zn(2+)-binding residues include Cys-226, Cys-299, Cys-306, and Cys-309.

Belongs to the RNA polymerase beta' chain family. RpoC2 subfamily. In plastids the minimal PEP RNA polymerase catalytic core is composed of four subunits: alpha, beta, beta', and beta''. When a (nuclear-encoded) sigma factor is associated with the core the holoenzyme is formed, which can initiate transcription. The cofactor is Zn(2+).

The protein resides in the plastid. It localises to the chloroplast. It carries out the reaction RNA(n) + a ribonucleoside 5'-triphosphate = RNA(n+1) + diphosphate. Its function is as follows. DNA-dependent RNA polymerase catalyzes the transcription of DNA into RNA using the four ribonucleoside triphosphates as substrates. This Cycas taitungensis (Prince sago) protein is DNA-directed RNA polymerase subunit beta''.